Reading from the N-terminus, the 489-residue chain is Mitochondrial distribution and morphology protein 12 (489 aa).

Positions 1-489 (MSIDLNWEAA…VFPSFWTFLV (489 aa)) constitute an SMP-LTD domain. A compositionally biased stretch (acidic residues) spans 72 to 82 (ESDSEDEDEGH). 3 disordered regions span residues 72-97 (ESDS…AAAD), 201-313 (WPDA…MRER), and 394-432 (DINH…QPRR). Positions 231–249 (LDTGSPSRPSTANTNPTQL) are enriched in polar residues. Composition is skewed to low complexity over residues 250–265 (SHGQ…NTSN) and 398–424 (QQRQ…NNPE).

Belongs to the MDM12 family. As to quaternary structure, component of the ER-mitochondria encounter structure (ERMES) or MDM complex, composed of MMM1, MDM10, mdm12 and MDM34. An MMM1 homodimer associates with one molecule of mdm12 on each side in a pairwise head-to-tail manner, and the SMP-LTD domains of MMM1 and mdm12 generate a continuous hydrophobic tunnel for phospholipid trafficking.

It is found in the mitochondrion outer membrane. The protein localises to the endoplasmic reticulum membrane. Component of the ERMES/MDM complex, which serves as a molecular tether to connect the endoplasmic reticulum (ER) and mitochondria. Components of this complex are involved in the control of mitochondrial shape and protein biogenesis, and function in nonvesicular lipid trafficking between the ER and mitochondria. mdm12 is required for the interaction of the ER-resident membrane protein MMM1 and the outer mitochondrial membrane-resident beta-barrel protein MDM10. The mdm12-MMM1 subcomplex functions in the major beta-barrel assembly pathway that is responsible for biogenesis of all mitochondrial outer membrane beta-barrel proteins, and acts in a late step after the SAM complex. The MDM10-mdm12-MMM1 subcomplex further acts in the TOM40-specific pathway after the action of the mdm12-MMM1 complex. Essential for establishing and maintaining the structure of mitochondria and maintenance of mtDNA nucleoids. The sequence is that of Mitochondrial distribution and morphology protein 12 from Talaromyces marneffei (strain ATCC 18224 / CBS 334.59 / QM 7333) (Penicillium marneffei).